The following is a 433-amino-acid chain: 26S proteasome regulatory subunit 7 (433 aa).

The tract at residues 1–22 is disordered; the sequence is MPDYLGADQRKTKEDEKDDKPI. A compositionally biased stretch (basic and acidic residues) spans 8-22; the sequence is DQRKTKEDEKDDKPI. The residue at position 116 (lysine 116) is an N6-acetyllysine. 216 to 223 is an ATP binding site; it reads GPPGTGKT. Lysine 422 carries the post-translational modification N6-acetyllysine.

The protein belongs to the AAA ATPase family. Component of the 19S proteasome regulatory particle complex. The 26S proteasome consists of a 20S core particle (CP) and two 19S regulatory subunits (RP). The regulatory particle is made of a lid composed of 9 subunits, a base containing 6 ATPases including PSMC2 and few additional components. Interacts with NDC80/HEC; this interaction is detected only during M phase. Interacts and SQSTM1. Interacts with PAAF1. Directly interacts with TRIM5. In terms of processing, monoubiquitinated by RNF181. Phosphorylated. Dephosphorylated by UBLCP1 which impairs PSMC2 ATPase activity and disrupts 26S proteasome assembly.

The protein localises to the cytoplasm. It is found in the nucleus. Component of the 26S proteasome, a multiprotein complex involved in the ATP-dependent degradation of ubiquitinated proteins. This complex plays a key role in the maintenance of protein homeostasis by removing misfolded or damaged proteins, which could impair cellular functions, and by removing proteins whose functions are no longer required. Therefore, the proteasome participates in numerous cellular processes, including cell cycle progression, apoptosis, or DNA damage repair. PSMC2 belongs to the heterohexameric ring of AAA (ATPases associated with diverse cellular activities) proteins that unfolds ubiquitinated target proteins that are concurrently translocated into a proteolytic chamber and degraded into peptides. This chain is 26S proteasome regulatory subunit 7 (PSMC2), found in Bos taurus (Bovine).